The following is a 133-amino-acid chain: Profilin (133 aa).

It belongs to the profilin family. Occurs in many kinds of cells as a complex with monomeric actin in a 1:1 ratio.

Its subcellular location is the cytoplasm. The protein localises to the cytoskeleton. In terms of biological role, binds to actin and affects the structure of the cytoskeleton. At high concentrations, profilin prevents the polymerization of actin, whereas it enhances it at low concentrations. By binding to PIP2, it inhibits the formation of IP3 and DG. This is Profilin from Mercurialis annua (Annual mercury).